Here is a 137-residue protein sequence, read N- to C-terminus: ATP synthase epsilon chain (137 aa).

Belongs to the ATPase epsilon chain family. As to quaternary structure, F-type ATPases have 2 components, CF(1) - the catalytic core - and CF(0) - the membrane proton channel. CF(1) has five subunits: alpha(3), beta(3), gamma(1), delta(1), epsilon(1). CF(0) has three main subunits: a, b and c.

The protein resides in the cellular thylakoid membrane. In terms of biological role, produces ATP from ADP in the presence of a proton gradient across the membrane. The sequence is that of ATP synthase epsilon chain from Trichodesmium erythraeum (strain IMS101).